A 37-amino-acid chain; its full sequence is Large ribosomal subunit protein bL36A (37 aa).

The protein belongs to the bacterial ribosomal protein bL36 family.

The sequence is that of Large ribosomal subunit protein bL36A from Clavibacter sepedonicus (Clavibacter michiganensis subsp. sepedonicus).